We begin with the raw amino-acid sequence, 341 residues long: tRNA N6-adenosine threonylcarbamoyltransferase (341 aa).

The Fe cation site is built by H113 and H117. Residues 136–140, D169, G182, and N280 each bind substrate; that span reads IISGG. D308 provides a ligand contact to Fe cation.

Belongs to the KAE1 / TsaD family. Fe(2+) serves as cofactor.

The protein resides in the cytoplasm. It catalyses the reaction L-threonylcarbamoyladenylate + adenosine(37) in tRNA = N(6)-L-threonylcarbamoyladenosine(37) in tRNA + AMP + H(+). Functionally, required for the formation of a threonylcarbamoyl group on adenosine at position 37 (t(6)A37) in tRNAs that read codons beginning with adenine. Is involved in the transfer of the threonylcarbamoyl moiety of threonylcarbamoyl-AMP (TC-AMP) to the N6 group of A37, together with TsaE and TsaB. TsaD likely plays a direct catalytic role in this reaction. In Anaplasma marginale (strain St. Maries), this protein is tRNA N6-adenosine threonylcarbamoyltransferase.